A 43-amino-acid chain; its full sequence is Protein PsbN (43 aa).

The helical transmembrane segment at threonine 5–phenylalanine 27 threads the bilayer.

It belongs to the PsbN family.

The protein resides in the plastid. It localises to the chloroplast thylakoid membrane. Its function is as follows. May play a role in photosystem I and II biogenesis. The sequence is that of Protein PsbN from Cycas taitungensis (Prince sago).